The following is a 156-amino-acid chain: Small ribosomal subunit protein uS7 (156 aa).

This sequence belongs to the universal ribosomal protein uS7 family. In terms of assembly, part of the 30S ribosomal subunit. Contacts proteins S9 and S11.

One of the primary rRNA binding proteins, it binds directly to 16S rRNA where it nucleates assembly of the head domain of the 30S subunit. Is located at the subunit interface close to the decoding center, probably blocks exit of the E-site tRNA. In Cupriavidus metallidurans (strain ATCC 43123 / DSM 2839 / NBRC 102507 / CH34) (Ralstonia metallidurans), this protein is Small ribosomal subunit protein uS7.